The chain runs to 571 residues: Pectinesterase/pectinesterase inhibitor (571 aa).

Positions 27–178 (NSHQKAVESL…KILSSNAIDI (152 aa)) are pectinesterase inhibitor. Positions 233 to 254 (AQAGRPGAPADEGIGEGGGGGG) are disordered. The interval 259 to 558 (THVVAKDGSG…TVANWLTPAN (300 aa)) is pectinesterase. Residues threonine 336 and glutamine 366 each coordinate substrate. Aspartate 389 (proton donor; for pectinesterase activity) is an active-site residue. The active-site Nucleophile; for pectinesterase activity is aspartate 410. Substrate is bound by residues arginine 479 and tryptophan 481.

The protein in the N-terminal section; belongs to the PMEI family. It in the C-terminal section; belongs to the pectinesterase family.

It localises to the secreted. The protein resides in the cell wall. It catalyses the reaction [(1-&gt;4)-alpha-D-galacturonosyl methyl ester](n) + n H2O = [(1-&gt;4)-alpha-D-galacturonosyl](n) + n methanol + n H(+). The protein operates within glycan metabolism; pectin degradation; 2-dehydro-3-deoxy-D-gluconate from pectin: step 1/5. Its function is as follows. Acts in the modification of cell walls via demethylesterification of cell wall pectin. This is Pectinesterase/pectinesterase inhibitor from Brassica campestris (Field mustard).